A 347-amino-acid polypeptide reads, in one-letter code: MTGIWDVRITDTSLRDGSHHKRHQFIKEEVGAIVAALDAAGVPVIEVTHGDGLGGSSFNYGFSKTSEQELIKLAAQTAKEAKIAFLMLPGVGTKEDIKEAQDNGGSICRIATHCTEADVSIQHLGLARELGLETVGFLMMAHTIAPEKLAAQARIMADAGCQCVYVVDSAGALVLDGVADRVAALVAELGEDAQVGFHGHENLGLGVANSVEAVRAGAKQIDGSVRRFGAGAGNAPVEALIGVFDKIGVKTGIDFFDIADAAEDVVRPAMPAECLLDRNALIMGYSGVYSSFLKHAVRQSERYGVPAHQLLHRAGQRKLIGGQEDQLIDIALEIKREQESGQVASRR.

The Pyruvate carboxyltransferase domain maps to 7–259 (VRITDTSLRD…KTGIDFFDIA (253 aa)). 15–16 (RD) contacts substrate. A Mn(2+)-binding site is contributed by Asp16. The active-site Proton acceptor is the His19. Substrate contacts are provided by Ser169 and His198. Positions 198 and 200 each coordinate Mn(2+). Tyr289 lines the substrate pocket.

The protein belongs to the 4-hydroxy-2-oxovalerate aldolase family.

The enzyme catalyses (S)-4-hydroxy-2-oxopentanoate = acetaldehyde + pyruvate. This is 4-hydroxy-2-oxovalerate aldolase 2 from Mycobacterium ulcerans (strain Agy99).